The chain runs to 71 residues: Translation initiation factor IF-1 (71 aa).

An S1-like domain is found at 1–71 (MAKQSAIEQD…LSKARITYRY (71 aa)).

Belongs to the IF-1 family. Component of the 30S ribosomal translation pre-initiation complex which assembles on the 30S ribosome in the order IF-2 and IF-3, IF-1 and N-formylmethionyl-tRNA(fMet); mRNA recruitment can occur at any time during PIC assembly.

Its subcellular location is the cytoplasm. Its function is as follows. One of the essential components for the initiation of protein synthesis. Stabilizes the binding of IF-2 and IF-3 on the 30S subunit to which N-formylmethionyl-tRNA(fMet) subsequently binds. Helps modulate mRNA selection, yielding the 30S pre-initiation complex (PIC). Upon addition of the 50S ribosomal subunit IF-1, IF-2 and IF-3 are released leaving the mature 70S translation initiation complex. The sequence is that of Translation initiation factor IF-1 from Flavobacterium psychrophilum (strain ATCC 49511 / DSM 21280 / CIP 103535 / JIP02/86).